The following is an 851-amino-acid chain: Putative serine/threonine-protein kinase 019R (851 aa).

5 disordered regions span residues 1–24, 61–91, 104–160, 190–216, and 340–400; these read MATN…RTIK, PRVA…RGGP, GGAS…KRGG, GLSP…ARRS, and SRPS…GEPR. Positions 125–141 are enriched in low complexity; sequence ARRQSPAEAAEASPCPE. The segment covering 196-216 has biased composition (basic residues); the sequence is SHMRKSPARRSPARRSPARRS. Residues 340–366 show a composition bias toward low complexity; that stretch reads SRPSGVSRTSGTSGSSGSSASSRPPNS. In terms of domain architecture, Protein kinase spans 456–851; it reads AVSDNVIGQG…GEREIESFTM (396 aa). ATP contacts are provided by residues 462–470 and lysine 485; that span reads IGQGSWGSV. Aspartate 608 acts as the Proton acceptor in catalysis.

Belongs to the protein kinase superfamily. Ser/Thr protein kinase family.

It catalyses the reaction L-seryl-[protein] + ATP = O-phospho-L-seryl-[protein] + ADP + H(+). The enzyme catalyses L-threonyl-[protein] + ATP = O-phospho-L-threonyl-[protein] + ADP + H(+). The chain is Putative serine/threonine-protein kinase 019R from Dryophytes versicolor (chameleon treefrog).